The primary structure comprises 285 residues: SLAM family member 9 (285 aa).

An N-terminal signal peptide occupies residues 1-17; that stretch reads MGALLWSLLLLLQEAKG. Topologically, residues 18 to 232 are extracellular; sequence FSGDDEDPEE…YPEKPSMLCL (215 aa). The Ig-like V-type domain maps to 25 to 126; that stretch reads PEEVIGVLQE…SHITKSYHLR (102 aa). Asn-37, Asn-97, Asn-141, Asn-149, Asn-175, and Asn-206 each carry an N-linked (GlcNAc...) asparagine glycan. The Ig-like C2-type domain maps to 134–213; that stretch reads PHITVNSNIS…VSNISSRRIS (80 aa). Cys-154 and Cys-198 are joined by a disulfide. Residues 233-253 form a helical membrane-spanning segment; it reads LVKSLFLLLLLAILTVGLCLF. At 254–285 the chain is on the cytoplasmic side; it reads RAQKSYETPRVRKLKRNRIKLRKKGKSGPTPV.

Its subcellular location is the membrane. In terms of biological role, may play a role in the immune response. This is SLAM family member 9 (Slamf9) from Mus musculus (Mouse).